A 304-amino-acid chain; its full sequence is Phosphatidylserine decarboxylase proenzyme (304 aa).

Active-site charge relay system; for autoendoproteolytic cleavage activity residues include Asp-90, His-147, and Ser-253. Residue Ser-253 is the Schiff-base intermediate with substrate; via pyruvic acid; for decarboxylase activity of the active site. The residue at position 253 (Ser-253) is a Pyruvic acid (Ser); by autocatalysis.

Belongs to the phosphatidylserine decarboxylase family. PSD-B subfamily. Prokaryotic type I sub-subfamily. Heterodimer of a large membrane-associated beta subunit and a small pyruvoyl-containing alpha subunit. Pyruvate is required as a cofactor. In terms of processing, is synthesized initially as an inactive proenzyme. Formation of the active enzyme involves a self-maturation process in which the active site pyruvoyl group is generated from an internal serine residue via an autocatalytic post-translational modification. Two non-identical subunits are generated from the proenzyme in this reaction, and the pyruvate is formed at the N-terminus of the alpha chain, which is derived from the carboxyl end of the proenzyme. The autoendoproteolytic cleavage occurs by a canonical serine protease mechanism, in which the side chain hydroxyl group of the serine supplies its oxygen atom to form the C-terminus of the beta chain, while the remainder of the serine residue undergoes an oxidative deamination to produce ammonia and the pyruvoyl prosthetic group on the alpha chain. During this reaction, the Ser that is part of the protease active site of the proenzyme becomes the pyruvoyl prosthetic group, which constitutes an essential element of the active site of the mature decarboxylase.

The protein resides in the cell membrane. It catalyses the reaction a 1,2-diacyl-sn-glycero-3-phospho-L-serine + H(+) = a 1,2-diacyl-sn-glycero-3-phosphoethanolamine + CO2. The protein operates within phospholipid metabolism; phosphatidylethanolamine biosynthesis; phosphatidylethanolamine from CDP-diacylglycerol: step 2/2. Its function is as follows. Catalyzes the formation of phosphatidylethanolamine (PtdEtn) from phosphatidylserine (PtdSer). The protein is Phosphatidylserine decarboxylase proenzyme of Dickeya dadantii (strain 3937) (Erwinia chrysanthemi (strain 3937)).